Consider the following 551-residue polypeptide: Probable 4-coumarate--CoA ligase 3 (551 aa).

Positions 205, 206, 207, 208, 209, and 213 each coordinate ATP. Phe253 serves as a coordination point for (E)-4-coumaroyl-AMP. CoA is bound at residue Lys274. Residues 276 to 346 form an SBD1 region; the sequence is EPVRFLELIK…RFKGRLVIKQ (71 aa). Ala323, Gln346, Gly347, and Thr351 together coordinate (E)-4-coumaroyl-AMP. 5 residues coordinate ATP: Gln346, Gly347, Thr351, Asp430, and Arg445. The tract at residues 347–409 is SBD2; the sequence is GYGATELSPC…IKGPNVMLGY (63 aa). Positions 447 and 451 each coordinate (E)-4-coumaroyl-AMP. Positions 453 and 454 each coordinate CoA. Lys537 lines the ATP pocket.

Belongs to the ATP-dependent AMP-binding enzyme family. Requires Mg(2+) as cofactor.

The catalysed reaction is (E)-4-coumarate + ATP + CoA = (E)-4-coumaroyl-CoA + AMP + diphosphate. It carries out the reaction (E)-4-coumarate + ATP + H(+) = (E)-4-coumaroyl-AMP + diphosphate. The enzyme catalyses (E)-4-coumaroyl-AMP + CoA = (E)-4-coumaroyl-CoA + AMP + H(+). Its pathway is phytoalexin biosynthesis; 3,4',5-trihydroxystilbene biosynthesis; 3,4',5-trihydroxystilbene from trans-4-coumarate: step 1/2. Carboxylate--CoA ligase that may use 4-coumarate as substrate. Follows a two-step reaction mechanism, wherein the carboxylate substrate first undergoes adenylation by ATP, followed by a thioesterification in the presence of CoA to yield the final CoA thioester. The chain is Probable 4-coumarate--CoA ligase 3 (4cl3) from Dictyostelium discoideum (Social amoeba).